The primary structure comprises 197 residues: Probable nicotinate-nucleotide adenylyltransferase (197 aa).

It belongs to the NadD family.

It carries out the reaction nicotinate beta-D-ribonucleotide + ATP + H(+) = deamido-NAD(+) + diphosphate. Its pathway is cofactor biosynthesis; NAD(+) biosynthesis; deamido-NAD(+) from nicotinate D-ribonucleotide: step 1/1. Functionally, catalyzes the reversible adenylation of nicotinate mononucleotide (NaMN) to nicotinic acid adenine dinucleotide (NaAD). This chain is Probable nicotinate-nucleotide adenylyltransferase, found in Leptospira borgpetersenii serovar Hardjo-bovis (strain JB197).